We begin with the raw amino-acid sequence, 201 residues long: Esterase TesA (201 aa).

An N-terminal signal peptide occupies residues 1-21 (MRALLLSGCLALVLLTQQAAA). Residue Ser-30 is the Nucleophile of the active site. Active-site residues include Asp-177 and His-180.

It belongs to the 'GDSL' lipolytic enzyme family.

The protein resides in the secreted. It carries out the reaction a carboxylic ester + H2O = an alcohol + a carboxylate + H(+). Its function is as follows. Esterase that exhibits the highest activity towards Tween detergents and p-nitrophenyl esters of short acyl chain length. Also displays a low thioesterase activity towards palmitoyl-coenzyme A, but is not active towards acetyl-coenzyme A. The polypeptide is Esterase TesA (tesA) (Pseudomonas aeruginosa (strain ATCC 15692 / DSM 22644 / CIP 104116 / JCM 14847 / LMG 12228 / 1C / PRS 101 / PAO1)).